Consider the following 292-residue polypeptide: Undecaprenyl-diphosphatase (292 aa).

A run of 7 helical transmembrane segments spans residues 1-21, 46-66, 90-110, 114-134, 192-212, 225-245, and 253-273; these read MSLVSAALFGLLQALTEFLPV, FVTIIQAGTTLAVLVYFRADI, LGWYIVLGTVPAALAGKLLEH, ALGNWVIAGSLVALGLVLLAA, FLLSVPITLAAGAYKLWSTVP, VVGTVVSAVAGYLVIDWLLAW, and VFVVWRLAAGAAIAALILSGV.

This sequence belongs to the UppP family.

The protein localises to the cell inner membrane. The enzyme catalyses di-trans,octa-cis-undecaprenyl diphosphate + H2O = di-trans,octa-cis-undecaprenyl phosphate + phosphate + H(+). Its function is as follows. Catalyzes the dephosphorylation of undecaprenyl diphosphate (UPP). Confers resistance to bacitracin. The polypeptide is Undecaprenyl-diphosphatase (Anaeromyxobacter dehalogenans (strain 2CP-1 / ATCC BAA-258)).